The following is a 148-amino-acid chain: Extracellular globin-2B (148 aa).

Positions 3–148 (CCSAADRHEV…IADVIKAELP (146 aa)) constitute a Globin domain. A disulfide bridge links cysteine 4 with cysteine 135. Histidine 98 lines the heme b pocket.

This sequence belongs to the globin family. Disulfide bonded trimer of chains IIA, IIB, and IIC.

The protein resides in the secreted. This chain is Extracellular globin-2B, found in Tylorrhynchus heterochetus (Japanese palolo worm).